The chain runs to 793 residues: Kinesin-like protein KIF3C (793 aa).

In terms of domain architecture, Kinesin motor spans 10 to 365; sequence ALKVVARCRP…LRFANRAKNI (356 aa). Residue 97 to 104 participates in ATP binding; that stretch reads GQTGTGKT. 3 disordered regions span residues 251–288, 395–423, and 756–793; these read ERQN…ERPK, EKRG…GYPE, and KVRK…ADHE. A compositionally biased stretch (gly residues) spans 270–284; the sequence is GGSGGGGGSGGGAGG. Residues 376-630 are a coiled coil; the sequence is KDTLLREFQE…QNEQTRELKL (255 aa). Residues 399–413 show a composition bias toward basic residues; it reads MLGKRPRRKSSRGKK. The segment at 631–793 is globular; that stretch reads KYLIIENFIP…LRPATVADHE (163 aa).

Belongs to the TRAFAC class myosin-kinesin ATPase superfamily. Kinesin family. Kinesin II subfamily. As to quaternary structure, heterodimer of KIF3A and KIF3C.

It is found in the cytoplasm. The protein resides in the cytoskeleton. Its function is as follows. Microtubule-based anterograde translocator for membranous organelles. The protein is Kinesin-like protein KIF3C (KIF3C) of Pongo abelii (Sumatran orangutan).